The following is a 385-amino-acid chain: Proteinase-activated receptor 4 (385 aa).

The first 17 residues, Met-1–Ser-17, serve as a signal peptide directing secretion. The propeptide at Gly-18 to Arg-47 is removed for receptor activation. The tract at residues Gln-21–Ile-42 is disordered. Topologically, residues Gly-48–Ala-82 are extracellular. Asn-56 carries N-linked (GlcNAc...) asparagine glycosylation. Residues Leu-83–Ala-103 form a helical membrane-spanning segment. At Thr-104–Arg-108 the chain is on the cytoplasmic side. Residues Leu-109–Leu-129 traverse the membrane as a helical segment. The Extracellular portion of the chain corresponds to Pro-130–Leu-151. Cys-149 and Cys-228 are joined by a disulfide. The chain crosses the membrane as a helical span at residues Ala-152 to Leu-172. Topologically, residues Asp-173 to Leu-192 are cytoplasmic. A helical membrane pass occupies residues Ala-193–Leu-213. Residues Gln-214 to Cys-247 are Extracellular-facing. A helical membrane pass occupies residues Leu-248 to Leu-268. At His-269 to Arg-283 the chain is on the cytoplasmic side. Residues Leu-284–Leu-304 form a helical membrane-spanning segment. Residues Leu-305–Tyr-319 are Extracellular-facing. A helical membrane pass occupies residues Gly-320–Val-343. The Cytoplasmic portion of the chain corresponds to Ser-344 to Gln-385. Residues Asp-362 to Gln-385 are disordered.

This sequence belongs to the G-protein coupled receptor 1 family. Post-translationally, a proteolytic cleavage generates a new N-terminus that functions as a tethered ligand. As to expression, widely expressed, with highest levels in lung, pancreas, thyroid, testis and small intestine. Not expressed in brain, kidney, spinal cord and peripheral blood leukocytes. Also detected in platelets.

It localises to the cell membrane. Activated upon interaction by mucunain, a cowhage (Mucuna pruriens) plant cysteine proteinase. Functionally, receptor for activated thrombin or trypsin coupled to G proteins that stimulate phosphoinositide hydrolysis. May play a role in platelets activation. This Homo sapiens (Human) protein is Proteinase-activated receptor 4 (F2RL3).